The following is a 219-amino-acid chain: tRNA (guanine-N(7)-)-methyltransferase (219 aa).

S-adenosyl-L-methionine contacts are provided by glutamate 44, aspartate 69, glutamate 102, and asparagine 125. 2 residues coordinate substrate: lysine 129 and aspartate 161.

Belongs to the class I-like SAM-binding methyltransferase superfamily. TrmB family.

The enzyme catalyses guanosine(46) in tRNA + S-adenosyl-L-methionine = N(7)-methylguanosine(46) in tRNA + S-adenosyl-L-homocysteine. Its pathway is tRNA modification; N(7)-methylguanine-tRNA biosynthesis. Functionally, catalyzes the formation of N(7)-methylguanine at position 46 (m7G46) in tRNA. The polypeptide is tRNA (guanine-N(7)-)-methyltransferase (Clostridium perfringens (strain 13 / Type A)).